The sequence spans 467 residues: 3-isopropylmalate dehydratase large subunit (467 aa).

3 residues coordinate [4Fe-4S] cluster: Cys-347, Cys-407, and Cys-410.

This sequence belongs to the aconitase/IPM isomerase family. LeuC type 1 subfamily. In terms of assembly, heterodimer of LeuC and LeuD. The cofactor is [4Fe-4S] cluster.

The catalysed reaction is (2R,3S)-3-isopropylmalate = (2S)-2-isopropylmalate. Its pathway is amino-acid biosynthesis; L-leucine biosynthesis; L-leucine from 3-methyl-2-oxobutanoate: step 2/4. Functionally, catalyzes the isomerization between 2-isopropylmalate and 3-isopropylmalate, via the formation of 2-isopropylmaleate. The protein is 3-isopropylmalate dehydratase large subunit of Picosynechococcus sp. (strain ATCC 27264 / PCC 7002 / PR-6) (Agmenellum quadruplicatum).